The chain runs to 402 residues: Multidrug resistance protein MdtH (402 aa).

Residues 1–12 (MSRVSQARNLGK) are Cytoplasmic-facing. The helical transmembrane segment at 13–33 (YFLLIDNMLVVLGFFVVFPLI) threads the bilayer. At 34 to 98 (SIRFVDQMGW…GFATMGIAHE (65 aa)) the chain is on the periplasmic side. The chain crosses the membrane as a helical span at residues 99 to 116 (PWLLWFSCFLSGLGGTLF). Residues 117 to 138 (DPPRSALVVKLIRPEQRDRFFS) are Cytoplasmic-facing. Residues 139–159 (LLMMQDSAGAVIGALLGSWLL) traverse the membrane as a helical segment. Topologically, residues 160–164 (QYDFR) are periplasmic. Residues 165–185 (LVCATGAILFILCALFNAWLL) form a helical membrane-spanning segment. Topologically, residues 186–213 (PAWKLSTVRTPVREGMRRVMSDKRFVTY) are cytoplasmic. The helical transmembrane segment at 214–234 (VLTLAGYYMLAVQVMLMLPIM) threads the bilayer. Topologically, residues 235–243 (VNDIAGSPA) are periplasmic. A helical transmembrane segment spans residues 244–264 (AVKWMYAIEACLSLTLLYPIA). At 265-276 (RWSEKRFRLEHR) the chain is on the cytoplasmic side. The chain crosses the membrane as a helical span at residues 277–297 (LMAGLLVMSLSMLPIGMVGNL). Residues 298-299 (QQ) are Periplasmic-facing. The helical transmembrane segment at 300–320 (LFTLICAFYIGSVIAEPARET) threads the bilayer. Over 321–339 (LSASLADARARGSYMGFSR) the chain is Cytoplasmic. A helical transmembrane segment spans residues 340–360 (LGLAIGGAIGYIGGGWLFDMG). Residues 361–367 (KALAQPE) are Periplasmic-facing. A helical transmembrane segment spans residues 368–388 (LPWMMLGIIGFITFLALGWQF). The Cytoplasmic portion of the chain corresponds to 389–402 (SHKRTPRRMLEPGA).

It belongs to the major facilitator superfamily. DHA1 family. MdtH (TC 2.A.1.2.21) subfamily.

It is found in the cell inner membrane. The chain is Multidrug resistance protein MdtH from Salmonella typhimurium (strain LT2 / SGSC1412 / ATCC 700720).